The following is a 185-amino-acid chain: Elongation factor P (185 aa).

The protein belongs to the elongation factor P family.

The protein localises to the cytoplasm. It functions in the pathway protein biosynthesis; polypeptide chain elongation. In terms of biological role, involved in peptide bond synthesis. Stimulates efficient translation and peptide-bond synthesis on native or reconstituted 70S ribosomes in vitro. Probably functions indirectly by altering the affinity of the ribosome for aminoacyl-tRNA, thus increasing their reactivity as acceptors for peptidyl transferase. The sequence is that of Elongation factor P from Brevibacillus brevis (strain 47 / JCM 6285 / NBRC 100599).